Reading from the N-terminus, the 367-residue chain is Pre-small/secreted glycoprotein (367 aa).

Positions 1–33 (MGSGYQLLQLPRERFRKTSFLVWVIILFQRAIS) are cleaved as a signal peptide. A glycan (N-linked (GlcNAc...) asparagine; by host) is linked at Asn-41. 2 cysteine pairs are disulfide-bonded: Cys-109–Cys-136 and Cys-122–Cys-148. N-linked (GlcNAc...) asparagine; by host glycosylation is found at Asn-205, Asn-239, Asn-258, and Asn-269.

Belongs to the filoviruses glycoprotein family. Homodimer; disulfide-linked. The homodimers are linked by two disulfide bonds in a parallel orientation. As to quaternary structure, monomer. This precursor is processed into mature sGP and delta-peptide by host furin or furin-like proteases. The cleavage site corresponds to the furin optimal cleavage sequence [KR]-X-[KR]-R. In terms of processing, N-glycosylated. Post-translationally, O-glycosylated.

The protein localises to the secreted. Its function is as follows. Seems to possess an anti-inflammatory activity as it can reverse the barrier-decreasing effects of TNF alpha. Might therefore contribute to the lack of inflammatory reaction seen during infection in spite the of extensive necrosis and massive virus production. Does not seem to be involved in activation of primary macrophages. Does not seem to interact specifically with neutrophils. Functionally, viroporin that permeabilizes mammalian cell plasma membranes. It acts by altering permeation of ionic compounds and small molecules. This activity may lead to viral enterotoxic activity. The polypeptide is Pre-small/secreted glycoprotein (GP) (Reston ebolavirus (strain Siena/Philippine-92) (REBOV)).